Consider the following 251-residue polypeptide: Small ribosomal subunit protein uS2 (251 aa).

The protein belongs to the universal ribosomal protein uS2 family.

The protein is Small ribosomal subunit protein uS2 of Synechococcus elongatus (strain ATCC 33912 / PCC 7942 / FACHB-805) (Anacystis nidulans R2).